Reading from the N-terminus, the 255-residue chain is MAVNQSHTENRRGVLIPNGESLLKQSLNVELSFPRQSEGSNVFNGTKTGTLFLTSYRVIFITSHSINGPMLSFMMPFDLITNLTVEQPVFAANFIKGTIQAAPYGGWEGQATFKLVFRNGGAIEFAQLMVKAASSVIAYGAPPAGYGAPPAGYGAPPPGYGAPPAGYGAPPPGYGAPPAGYGAQPAGNEGPPVGYRASPAGYGAPPLGYEAPPAGNEGLPAGYRASPAGSGARPHESAAAQAPENEASLPSASSS.

A GRAM domain is found at 15–87 (LIPNGESLLK…DLITNLTVEQ (73 aa)). 7 repeat units span residues 139-145 (YGAPPAG), 146-152 (YGAPPAG), 153-159 (YGAPPPG), 160-166 (YGAPPAG), 167-173 (YGAPPPG), 174-180 (YGAPPAG), and 202-208 (YGAPPLG). Residues 139 to 208 (YGAPPAGYGA…PAGYGAPPLG (70 aa)) are 6 X 7 AA tandem repeat of Y-G-X-P-P-X-G. Residues 171–174 (PPGY) carry the PPxY motif motif. 2 disordered regions span residues 180–199 (GYGA…RASP) and 204–255 (APPL…ASSS).

Its function is as follows. May play a role in meiotic resumption and pronuclear formation, mediated by a WW domain-signaling pathway during fertilization. The polypeptide is Postacrosomal sheath WW domain-binding protein (WBP2NL) (Macaca fascicularis (Crab-eating macaque)).